The sequence spans 171 residues: Co-chaperone protein HscB homolog (171 aa).

The J domain maps to 3–75 (SHFALFDLEP…SQRARYLLSL (73 aa)).

It belongs to the HscB family. In terms of assembly, interacts with HscA and stimulates its ATPase activity.

Functionally, co-chaperone involved in the maturation of iron-sulfur cluster-containing proteins. Seems to help targeting proteins to be folded toward HscA. The protein is Co-chaperone protein HscB homolog of Azotobacter vinelandii.